The sequence spans 385 residues: 1-deoxy-D-xylulose 5-phosphate reductoisomerase (385 aa).

NADPH is bound by residues Thr-10, Gly-11, Ser-12, Ile-13, Lys-37, and Asn-124. Residue Lys-125 participates in 1-deoxy-D-xylulose 5-phosphate binding. Glu-126 contributes to the NADPH binding site. Asp-150 is a Mn(2+) binding site. 4 residues coordinate 1-deoxy-D-xylulose 5-phosphate: Ser-151, Glu-152, Ser-176, and His-199. Position 152 (Glu-152) interacts with Mn(2+). Gly-205 provides a ligand contact to NADPH. Positions 212, 217, 218, and 221 each coordinate 1-deoxy-D-xylulose 5-phosphate. Mn(2+) is bound at residue Glu-221.

Belongs to the DXR family. Mg(2+) is required as a cofactor. Requires Mn(2+) as cofactor.

The enzyme catalyses 2-C-methyl-D-erythritol 4-phosphate + NADP(+) = 1-deoxy-D-xylulose 5-phosphate + NADPH + H(+). Its pathway is isoprenoid biosynthesis; isopentenyl diphosphate biosynthesis via DXP pathway; isopentenyl diphosphate from 1-deoxy-D-xylulose 5-phosphate: step 1/6. Its function is as follows. Catalyzes the NADPH-dependent rearrangement and reduction of 1-deoxy-D-xylulose-5-phosphate (DXP) to 2-C-methyl-D-erythritol 4-phosphate (MEP). This is 1-deoxy-D-xylulose 5-phosphate reductoisomerase from Clostridium botulinum (strain 657 / Type Ba4).